The primary structure comprises 275 residues: Bis(5'-nucleosyl)-tetraphosphatase, symmetrical (275 aa).

The protein belongs to the Ap4A hydrolase family.

The catalysed reaction is P(1),P(4)-bis(5'-adenosyl) tetraphosphate + H2O = 2 ADP + 2 H(+). Hydrolyzes diadenosine 5',5'''-P1,P4-tetraphosphate to yield ADP. The sequence is that of Bis(5'-nucleosyl)-tetraphosphatase, symmetrical from Haemophilus influenzae (strain PittEE).